We begin with the raw amino-acid sequence, 233 residues long: Biosynthetic peptidoglycan transglycosylase (233 aa).

A helical membrane pass occupies residues 4–24 (LAYLAGCLIVGVVAMQVYFFL).

Belongs to the glycosyltransferase 51 family.

Its subcellular location is the cell inner membrane. It carries out the reaction [GlcNAc-(1-&gt;4)-Mur2Ac(oyl-L-Ala-gamma-D-Glu-L-Lys-D-Ala-D-Ala)](n)-di-trans,octa-cis-undecaprenyl diphosphate + beta-D-GlcNAc-(1-&gt;4)-Mur2Ac(oyl-L-Ala-gamma-D-Glu-L-Lys-D-Ala-D-Ala)-di-trans,octa-cis-undecaprenyl diphosphate = [GlcNAc-(1-&gt;4)-Mur2Ac(oyl-L-Ala-gamma-D-Glu-L-Lys-D-Ala-D-Ala)](n+1)-di-trans,octa-cis-undecaprenyl diphosphate + di-trans,octa-cis-undecaprenyl diphosphate + H(+). Its pathway is cell wall biogenesis; peptidoglycan biosynthesis. In terms of biological role, peptidoglycan polymerase that catalyzes glycan chain elongation from lipid-linked precursors. This chain is Biosynthetic peptidoglycan transglycosylase, found in Cupriavidus metallidurans (strain ATCC 43123 / DSM 2839 / NBRC 102507 / CH34) (Ralstonia metallidurans).